The chain runs to 658 residues: UvrABC system protein B (658 aa).

The Helicase ATP-binding domain maps to 26 to 414 (DGLRRGVKHQ…PGVVEQIIRP (389 aa)). Residue 39-46 (GATGTGKT) participates in ATP binding. A Beta-hairpin motif is present at residues 92–115 (YYDYYQPEAYVPQTDTYIEKDAKI). Residues 430–596 (QIDDLIGEIR…TVKKEIRDVI (167 aa)) enclose the Helicase C-terminal domain. Residues 622 to 657 (EELIRTLEAEMKEAAKALDFERAAQLRDIIFELKAE) enclose the UVR domain.

This sequence belongs to the UvrB family. Forms a heterotetramer with UvrA during the search for lesions. Interacts with UvrC in an incision complex.

The protein localises to the cytoplasm. Functionally, the UvrABC repair system catalyzes the recognition and processing of DNA lesions. A damage recognition complex composed of 2 UvrA and 2 UvrB subunits scans DNA for abnormalities. Upon binding of the UvrA(2)B(2) complex to a putative damaged site, the DNA wraps around one UvrB monomer. DNA wrap is dependent on ATP binding by UvrB and probably causes local melting of the DNA helix, facilitating insertion of UvrB beta-hairpin between the DNA strands. Then UvrB probes one DNA strand for the presence of a lesion. If a lesion is found the UvrA subunits dissociate and the UvrB-DNA preincision complex is formed. This complex is subsequently bound by UvrC and the second UvrB is released. If no lesion is found, the DNA wraps around the other UvrB subunit that will check the other stand for damage. The polypeptide is UvrABC system protein B (Geobacillus kaustophilus (strain HTA426)).